The primary structure comprises 84 residues: MALINPQFPYAGPVPIPGPAPTETMPLLNYRVEGRIAGIQQARQFMPFLQGPHRAVAEQTYHAIGTGIQMGQTFNQPLINTQEG.

Dimer.

It is found in the virion. Minor capsid protein essential for stable capsid assembly of complete particles. This is Minor capsid protein P30 (XXX) from Enterobacteria phage PRD1 (Bacteriophage PRD1).